The primary structure comprises 562 residues: SLAIN motif-containing protein-like (562 aa).

Disordered regions lie at residues Gln-292–Leu-313, His-344–His-381, and Ser-409–Tyr-562. 2 stretches are compositionally biased toward low complexity: residues Ala-295–His-311 and Arg-345–Arg-355. Polar residues-rich tracts occupy residues Cys-356–Arg-370, Gln-424–Pro-442, Val-465–Pro-531, and Ser-539–Gly-553.

This sequence belongs to the SLAIN motif-containing family.

In Xenopus laevis (African clawed frog), this protein is SLAIN motif-containing protein-like.